Consider the following 295-residue polypeptide: Phosphoribosylaminoimidazole-succinocarboxamide synthase (295 aa).

This sequence belongs to the SAICAR synthetase family.

It catalyses the reaction 5-amino-1-(5-phospho-D-ribosyl)imidazole-4-carboxylate + L-aspartate + ATP = (2S)-2-[5-amino-1-(5-phospho-beta-D-ribosyl)imidazole-4-carboxamido]succinate + ADP + phosphate + 2 H(+). It participates in purine metabolism; IMP biosynthesis via de novo pathway; 5-amino-1-(5-phospho-D-ribosyl)imidazole-4-carboxamide from 5-amino-1-(5-phospho-D-ribosyl)imidazole-4-carboxylate: step 1/2. The chain is Phosphoribosylaminoimidazole-succinocarboxamide synthase from Halorhodospira halophila (strain DSM 244 / SL1) (Ectothiorhodospira halophila (strain DSM 244 / SL1)).